We begin with the raw amino-acid sequence, 941 residues long: Glycine dehydrogenase (decarboxylating) (941 aa).

Lys-692 is subject to N6-(pyridoxal phosphate)lysine.

The protein belongs to the GcvP family. The glycine cleavage system is composed of four proteins: P, T, L and H. The cofactor is pyridoxal 5'-phosphate.

The catalysed reaction is N(6)-[(R)-lipoyl]-L-lysyl-[glycine-cleavage complex H protein] + glycine + H(+) = N(6)-[(R)-S(8)-aminomethyldihydrolipoyl]-L-lysyl-[glycine-cleavage complex H protein] + CO2. The glycine cleavage system catalyzes the degradation of glycine. The P protein binds the alpha-amino group of glycine through its pyridoxal phosphate cofactor; CO(2) is released and the remaining methylamine moiety is then transferred to the lipoamide cofactor of the H protein. The protein is Glycine dehydrogenase (decarboxylating) of Mycobacterium tuberculosis (strain ATCC 25177 / H37Ra).